A 459-amino-acid polypeptide reads, in one-letter code: Putrescine aminotransferase (459 aa).

Pyridoxal 5'-phosphate contacts are provided by residues 150–151 and Gln-274; that span reads GT. Position 300 is an N6-(pyridoxal phosphate)lysine (Lys-300). Thr-332 is a binding site for pyridoxal 5'-phosphate.

The protein belongs to the class-III pyridoxal-phosphate-dependent aminotransferase family. Putrescine aminotransferase subfamily. Requires pyridoxal 5'-phosphate as cofactor.

It catalyses the reaction an alkane-alpha,omega-diamine + 2-oxoglutarate = an omega-aminoaldehyde + L-glutamate. It carries out the reaction putrescine + 2-oxoglutarate = 1-pyrroline + L-glutamate + H2O. The enzyme catalyses cadaverine + 2-oxoglutarate = 5-aminopentanal + L-glutamate. It participates in amine and polyamine degradation; putrescine degradation; 4-aminobutanal from putrescine (transaminase route): step 1/1. In terms of biological role, catalyzes the aminotransferase reaction from putrescine to 2-oxoglutarate, leading to glutamate and 4-aminobutanal, which spontaneously cyclizes to form 1-pyrroline. This is the first step in one of two pathways for putrescine degradation, where putrescine is converted into 4-aminobutanoate (gamma-aminobutyrate or GABA) via 4-aminobutanal. Also functions as a cadaverine transaminase in a a L-lysine degradation pathway to succinate that proceeds via cadaverine, glutarate and L-2-hydroxyglutarate. This is Putrescine aminotransferase from Escherichia coli (strain K12 / MC4100 / BW2952).